The following is a 312-amino-acid chain: Ribosomal RNA small subunit methyltransferase H (312 aa).

S-adenosyl-L-methionine contacts are provided by residues 33-35 (GGY), aspartate 51, phenylalanine 78, aspartate 97, and glutamine 104.

It belongs to the methyltransferase superfamily. RsmH family.

It localises to the cytoplasm. The catalysed reaction is cytidine(1402) in 16S rRNA + S-adenosyl-L-methionine = N(4)-methylcytidine(1402) in 16S rRNA + S-adenosyl-L-homocysteine + H(+). Specifically methylates the N4 position of cytidine in position 1402 (C1402) of 16S rRNA. The chain is Ribosomal RNA small subunit methyltransferase H from Orientia tsutsugamushi (strain Ikeda) (Rickettsia tsutsugamushi).